We begin with the raw amino-acid sequence, 242 residues long: Small ribosomal subunit protein uS2 (242 aa).

It belongs to the universal ribosomal protein uS2 family.

This Shewanella loihica (strain ATCC BAA-1088 / PV-4) protein is Small ribosomal subunit protein uS2.